A 364-amino-acid polypeptide reads, in one-letter code: Chaperone protein DnaJ (364 aa).

The region spanning 4–69 is the J domain; it reads DYYEILGLSK…NKKAKYDRFG (66 aa). The CR-type zinc finger occupies 135 to 213; that stretch reads GYKNNINITR…CKGKGRITNQ (79 aa). The Zn(2+) site is built by Cys148, Cys151, Cys165, Cys168, Cys187, Cys190, Cys201, and Cys204. CXXCXGXG motif repeat units lie at residues 148 to 155, 165 to 172, 187 to 194, and 201 to 208; these read CHSCLGKK, CNMCNGSG, CSKCYGEG, and CKSCKGKG.

This sequence belongs to the DnaJ family. Homodimer. Zn(2+) is required as a cofactor.

The protein localises to the cytoplasm. Participates actively in the response to hyperosmotic and heat shock by preventing the aggregation of stress-denatured proteins and by disaggregating proteins, also in an autonomous, DnaK-independent fashion. Unfolded proteins bind initially to DnaJ; upon interaction with the DnaJ-bound protein, DnaK hydrolyzes its bound ATP, resulting in the formation of a stable complex. GrpE releases ADP from DnaK; ATP binding to DnaK triggers the release of the substrate protein, thus completing the reaction cycle. Several rounds of ATP-dependent interactions between DnaJ, DnaK and GrpE are required for fully efficient folding. Also involved, together with DnaK and GrpE, in the DNA replication of plasmids through activation of initiation proteins. The sequence is that of Chaperone protein DnaJ from Borrelia garinii subsp. bavariensis (strain ATCC BAA-2496 / DSM 23469 / PBi) (Borreliella bavariensis).